A 312-amino-acid chain; its full sequence is Olfactory receptor 6C75 (312 aa).

The Extracellular portion of the chain corresponds to 1 to 23 (MRNSTAVTDFILLGLTSDPQWQV). A glycan (N-linked (GlcNAc...) asparagine) is linked at Asn3. A helical transmembrane segment spans residues 24–44 (VLFIFLLVTYMLSVTGNLIII). Over 45-63 (TLTLSDPHLQTPMYFFLRN) the chain is Cytoplasmic. Residues 64 to 84 (FSFLEISFTSVCIPRFLVTVV) traverse the membrane as a helical segment. Topologically, residues 85–95 (TGNRTISYNGC) are extracellular. The cysteines at positions 95 and 177 are disulfide-linked. Residues 96 to 116 (VAQLFFFIFLGVTEFYLLAAM) traverse the membrane as a helical segment. Residues 117–140 (SYDRCMAICKPLHYTIIMSTRVCT) are Cytoplasmic-facing. Residues 141–161 (LLVFSSWLAGFLIIFPPVMLL) form a helical membrane-spanning segment. Residues 162–194 (LQLDFCASNVIDHFICDSSPMLQLSCTNTHFLE) lie on the Extracellular side of the membrane. Residues 195–215 (LMAFFLAVVTLMVTLTLVILS) form a helical membrane-spanning segment. At 216-237 (YTNIIRTILKIPSMSQRKKAFS) the chain is on the cytoplasmic side. The chain crosses the membrane as a helical span at residues 238–258 (TCSSHMIVVSISYSSCIFMYI). The Extracellular portion of the chain corresponds to 259–269 (KTSARERVTLS). Residues 270 to 290 (KGVAVLNTSVAPLLNPFIYTL) form a helical membrane-spanning segment. Residues 291 to 312 (RNKQVKQAFKSMVQKMIFSLNK) lie on the Cytoplasmic side of the membrane.

The protein belongs to the G-protein coupled receptor 1 family.

The protein resides in the cell membrane. Odorant receptor. The chain is Olfactory receptor 6C75 (OR6C75) from Homo sapiens (Human).